We begin with the raw amino-acid sequence, 85 residues long: uncharacterized protein (85 aa).

Belongs to the ycf76 family.

Its subcellular location is the plastid. It localises to the chloroplast. This is an uncharacterized protein from Zea mays (Maize).